Consider the following 171-residue polypeptide: Large ribosomal subunit protein uL10 (171 aa).

The protein belongs to the universal ribosomal protein uL10 family. As to quaternary structure, part of the ribosomal stalk of the 50S ribosomal subunit. The N-terminus interacts with L11 and the large rRNA to form the base of the stalk. The C-terminus forms an elongated spine to which L12 dimers bind in a sequential fashion forming a multimeric L10(L12)X complex.

In terms of biological role, forms part of the ribosomal stalk, playing a central role in the interaction of the ribosome with GTP-bound translation factors. The chain is Large ribosomal subunit protein uL10 from Paracoccus denitrificans (strain Pd 1222).